We begin with the raw amino-acid sequence, 230 residues long: Large ribosomal subunit protein uL1 (230 aa).

Belongs to the universal ribosomal protein uL1 family. In terms of assembly, part of the 50S ribosomal subunit.

Functionally, binds directly to 23S rRNA. The L1 stalk is quite mobile in the ribosome, and is involved in E site tRNA release. Protein L1 is also a translational repressor protein, it controls the translation of the L11 operon by binding to its mRNA. This Nitrosospira multiformis (strain ATCC 25196 / NCIMB 11849 / C 71) protein is Large ribosomal subunit protein uL1.